Here is a 151-residue protein sequence, read N- to C-terminus: Lipoprotein signal peptidase (151 aa).

The next 2 membrane-spanning stretches (helical) occupy residues 54–74 (GQMWFFYVVTTIIVGVIIYLI) and 83–103 (LLKIALGLVLGGAIGNFIDRL). Residues aspartate 110 and aspartate 125 contribute to the active site. The helical transmembrane segment at 120 to 140 (IFNIADSALTIGVGLFLLNIL) threads the bilayer.

This sequence belongs to the peptidase A8 family.

Its subcellular location is the cell membrane. The enzyme catalyses Release of signal peptides from bacterial membrane prolipoproteins. Hydrolyzes -Xaa-Yaa-Zaa-|-(S,diacylglyceryl)Cys-, in which Xaa is hydrophobic (preferably Leu), and Yaa (Ala or Ser) and Zaa (Gly or Ala) have small, neutral side chains.. The protein operates within protein modification; lipoprotein biosynthesis (signal peptide cleavage). In terms of biological role, this protein specifically catalyzes the removal of signal peptides from prolipoproteins. The polypeptide is Lipoprotein signal peptidase (Shouchella clausii (strain KSM-K16) (Alkalihalobacillus clausii)).